A 156-amino-acid polypeptide reads, in one-letter code: ATP synthase subunit b (156 aa).

Residues 7-29 form a helical membrane-spanning segment; the sequence is LLGQAISFALFVWFCIKFVWPPL.

Belongs to the ATPase B chain family. In terms of assembly, F-type ATPases have 2 components, F(1) - the catalytic core - and F(0) - the membrane proton channel. F(1) has five subunits: alpha(3), beta(3), gamma(1), delta(1), epsilon(1). F(0) has three main subunits: a(1), b(2) and c(10-14). The alpha and beta chains form an alternating ring which encloses part of the gamma chain. F(1) is attached to F(0) by a central stalk formed by the gamma and epsilon chains, while a peripheral stalk is formed by the delta and b chains.

Its subcellular location is the cell inner membrane. Its function is as follows. F(1)F(0) ATP synthase produces ATP from ADP in the presence of a proton or sodium gradient. F-type ATPases consist of two structural domains, F(1) containing the extramembraneous catalytic core and F(0) containing the membrane proton channel, linked together by a central stalk and a peripheral stalk. During catalysis, ATP synthesis in the catalytic domain of F(1) is coupled via a rotary mechanism of the central stalk subunits to proton translocation. Component of the F(0) channel, it forms part of the peripheral stalk, linking F(1) to F(0). The polypeptide is ATP synthase subunit b (Shewanella sp. (strain W3-18-1)).